The chain runs to 577 residues: MSFWLSLIFCFFTFASSSPPDDPVNCEFGNTMCTVTNSYGAFPDRSICKAAKVEYPRTEAELVSIVAAATRAGQKMRVVTRYSHSFPKLVCTDGKDGTLISTKFLNHVVTTNPEAKTLTVESGVTLRQLIEEAAKFDLALPYAPYWWGLTVGGMMGTGAHGSSLWGKGSAVHDYVTEIRLVSPGLASDGYVKVQVLSETIDPEEFRAAKVSLGVLGVISQVTFELQPMFKRSLNYVMRNDSDFGDQAVSFGERHEFADFLWLPSQGKVVYRMDGRVPLNTSGDGLFEFFPFRSQLSLVLAIDRSLEESEESLEDANMKCVRAKLVSSSMFLMSYGVTNNGLIFTGYPVIGMQNHMMSSGSCLDSRQDGLITACPWDPRIKGQFFHQTTFSVSLTNVKSFINDIKALVKIEPKSLCVLEGSNGILIRYVTSSLAFLGKEEKALDFDLTYYRSKNDPLAPRLYEDYIEEIEQMAIFKYNALPHWGKNRNLAFDGAIRKYKNANAFLKVKEKFDSLGLFSTEWTDQILGLKGNVTIVKQGCALEGLCICSEDSHCAPTKGYLCRPGKVYREARVCTRVSS.

Residues 1 to 17 (MSFWLSLIFCFFTFASS) form the signal peptide. An FAD-binding PCMH-type domain is found at 46–228 (SICKAAKVEY…SQVTFELQPM (183 aa)).

It belongs to the oxygen-dependent FAD-linked oxidoreductase family. It depends on FAD as a cofactor.

It carries out the reaction L-gulono-1,4-lactone + O2 = L-ascorbate + H2O2 + H(+). The protein operates within cofactor biosynthesis; L-ascorbate biosynthesis. In terms of biological role, may be involved in the biosynthesis of ascorbic acid. This is Probable L-gulonolactone oxidase 4 from Arabidopsis thaliana (Mouse-ear cress).